A 331-amino-acid chain; its full sequence is Betaine-homocysteine S-methyltransferase (331 aa).

Residues 3–324 enclose the Hcy-binding domain; sequence VNQKWNWDTK…TDVLAIRKYV (322 aa). Residues Cys243, Cys309, and Cys310 each contribute to the Zn(2+) site.

The protein belongs to the Betaine-homocysteine S-methyltransferase, BHMT family. Zn(2+) is required as a cofactor.

It catalyses the reaction L-homocysteine + glycine betaine = N,N-dimethylglycine + L-methionine. The protein operates within amino-acid biosynthesis; L-methionine biosynthesis via de novo pathway. Its function is as follows. Involved in the regulation of homocysteine metabolism. Converts betaine and homocysteine to dimethylglycine and methionine, respectively. The chain is Betaine-homocysteine S-methyltransferase from Drosophila melanogaster (Fruit fly).